Here is a 335-residue protein sequence, read N- to C-terminus: Ketol-acid reductoisomerase (NADP(+)) 2 (335 aa).

A KARI N-terminal Rossmann domain is found at 1–180 (MKTYYEKDAN…GCTRAGVIET (180 aa)). NADP(+) contacts are provided by residues 24 to 27 (YGSQ), arginine 47, serine 51, and 81 to 84 (DEQQ). Histidine 106 is an active-site residue. Glycine 132 contributes to the NADP(+) binding site. In terms of domain architecture, KARI C-terminal knotted spans 181 to 326 (TFQEETETDL…AELREMMSWI (146 aa)). 4 residues coordinate Mg(2+): aspartate 189, glutamate 193, glutamate 225, and glutamate 229. Residue serine 250 coordinates substrate.

It belongs to the ketol-acid reductoisomerase family. Mg(2+) is required as a cofactor.

It carries out the reaction (2R)-2,3-dihydroxy-3-methylbutanoate + NADP(+) = (2S)-2-acetolactate + NADPH + H(+). The enzyme catalyses (2R,3R)-2,3-dihydroxy-3-methylpentanoate + NADP(+) = (S)-2-ethyl-2-hydroxy-3-oxobutanoate + NADPH + H(+). It participates in amino-acid biosynthesis; L-isoleucine biosynthesis; L-isoleucine from 2-oxobutanoate: step 2/4. It functions in the pathway amino-acid biosynthesis; L-valine biosynthesis; L-valine from pyruvate: step 2/4. Functionally, involved in the biosynthesis of branched-chain amino acids (BCAA). Catalyzes an alkyl-migration followed by a ketol-acid reduction of (S)-2-acetolactate (S2AL) to yield (R)-2,3-dihydroxy-isovalerate. In the isomerase reaction, S2AL is rearranged via a Mg-dependent methyl migration to produce 3-hydroxy-3-methyl-2-ketobutyrate (HMKB). In the reductase reaction, this 2-ketoacid undergoes a metal-dependent reduction by NADPH to yield (R)-2,3-dihydroxy-isovalerate. The protein is Ketol-acid reductoisomerase (NADP(+)) 2 of Bacillus cereus (strain ZK / E33L).